We begin with the raw amino-acid sequence, 180 residues long: MKLDKYTVGRRYGKALFELAIDSNSAEEIYQELLSLRQIYSEIPGLGNVLSDVRLEPHEKRIIMDKLVSGFDGIVKNFLEVVYSYNRMSELSFMIDEYEHRYNDYKGLLLGSVKTAVPLSDEQLQKLEMNVAKTMDYQTVELKQIVDSSIIGGAIVEANHRVIDGSIRTQLEKMRNQLNR.

The protein belongs to the ATPase delta chain family. F-type ATPases have 2 components, F(1) - the catalytic core - and F(0) - the membrane proton channel. F(1) has five subunits: alpha(3), beta(3), gamma(1), delta(1), epsilon(1). F(0) has three main subunits: a(1), b(2) and c(10-14). The alpha and beta chains form an alternating ring which encloses part of the gamma chain. F(1) is attached to F(0) by a central stalk formed by the gamma and epsilon chains, while a peripheral stalk is formed by the delta and b chains.

Its subcellular location is the cell membrane. Functionally, f(1)F(0) ATP synthase produces ATP from ADP in the presence of a proton or sodium gradient. F-type ATPases consist of two structural domains, F(1) containing the extramembraneous catalytic core and F(0) containing the membrane proton channel, linked together by a central stalk and a peripheral stalk. During catalysis, ATP synthesis in the catalytic domain of F(1) is coupled via a rotary mechanism of the central stalk subunits to proton translocation. This protein is part of the stalk that links CF(0) to CF(1). It either transmits conformational changes from CF(0) to CF(1) or is implicated in proton conduction. The sequence is that of ATP synthase subunit delta from Enterococcus hirae (strain ATCC 9790 / DSM 20160 / JCM 8729 / LMG 6399 / NBRC 3181 / NCIMB 6459 / NCDO 1258 / NCTC 12367 / WDCM 00089 / R).